Consider the following 659-residue polypeptide: MFQNNPLLAQLKQQIEASKEYVEGVVKTSDKSYGFLECEKNSYFIPPAEMKKVMHGDKVKAVVKRDGDKEQVEIDSLLEPMLERFIAQVRFNKDGKLQLAVDHPSINNFIPANTQKKVTEPLENGDWVVAQLKTHPLRDDRFFFAQVTQFICKADDNFAPWWVTLARHEQPREPVANEKSYELQDQVEREDLTHLYFTTIDSASTKDMDDALYVEPISENGTQTGWRLVVAIADPTAYIPEQSAIEKAARQRCFTNYLPGFNIPMLPRELSDDLCSLVPNEKRPALVGYIETDLSGNVVGEARFVSAWVQSKARLVYDEVSDYLEKVENHWTPDCAETAQQIDWLHQFTLARIDWRSKNALLFKEQGDYSFELAEDGAVKAIHIDYRRIANQMIEEAMIIANICAAQFLDKYAHTGVFNTHSGFDSKNLEPARKFLLDTLANDENRESLSERYSPERLSTLEGYCEMRRDIEQFPENFLEMRLRRYLTFAEFKATSAPHLGLGISHYATWTSPIRKYGDMVNHRLIKQVLSNQTAKPVEETVLARLQEARKQNRMVERDIADWLYARYLEPMVEQNVEFDGEIQDVSRGGLRVKVIENGASVFVPFSTLHNNKEEMLFSPEEIALYIKGEKAYQIGQAVKVKLKEVRVETRSVVGDVLI.

An RNB domain is found at 189–532 (REDLTHLYFT…HRLIKQVLSN (344 aa)). The S1 motif domain maps to 576 to 658 (NVEFDGEIQD…ETRSVVGDVL (83 aa)).

The protein belongs to the RNR ribonuclease family. RNase II subfamily.

The protein localises to the cytoplasm. It catalyses the reaction Exonucleolytic cleavage in the 3'- to 5'-direction to yield nucleoside 5'-phosphates.. Its function is as follows. Involved in mRNA degradation. Hydrolyzes single-stranded polyribonucleotides processively in the 3' to 5' direction. The protein is Exoribonuclease 2 of Glaesserella parasuis serovar 5 (strain SH0165) (Haemophilus parasuis).